Reading from the N-terminus, the 398-residue chain is Exodeoxyribonuclease 7 large subunit (398 aa).

The protein belongs to the XseA family. As to quaternary structure, heterooligomer composed of large and small subunits.

Its subcellular location is the cytoplasm. It catalyses the reaction Exonucleolytic cleavage in either 5'- to 3'- or 3'- to 5'-direction to yield nucleoside 5'-phosphates.. Functionally, bidirectionally degrades single-stranded DNA into large acid-insoluble oligonucleotides, which are then degraded further into small acid-soluble oligonucleotides. The polypeptide is Exodeoxyribonuclease 7 large subunit (Anaplasma phagocytophilum (strain HZ)).